A 78-amino-acid chain; its full sequence is Major outer membrane lipoprotein Lpp 1 (78 aa).

A signal peptide spans 1–20 (MNRTKLVLGAVILGSTLLAG). C21 carries N-palmitoyl cysteine lipidation. The S-diacylglycerol cysteine moiety is linked to residue C21. 2 repeats span residues 24–34 (NAKIDQLSSDV) and 38–48 (NAKVDQLSNDV). Residues 27–75 (IDQLSSDVQTLNAKVDQLSNDVNAMRSDVQAAKDDAARANQRLDNQATK) adopt a coiled-coil conformation. A disordered region spans residues 56 to 78 (QAAKDDAARANQRLDNQATKYRK). Positions 68–78 (RLDNQATKYRK) are enriched in polar residues. Position 78 is an N6-murein peptidoglycan lysine (K78).

This sequence belongs to the Lpp family. Homotrimer.

The protein localises to the cell outer membrane. It is found in the secreted. It localises to the cell wall. A highly abundant outer membrane lipoprotein that controls the distance between the inner and outer membranes. The only protein known to be covalently linked to the peptidoglycan network (PGN). Also non-covalently binds the PGN. The link between the cell outer membrane and PGN contributes to maintenance of the structural and functional integrity of the cell envelope, and maintains the correct distance between the PGN and the outer membrane. In Salmonella paratyphi A (strain ATCC 9150 / SARB42), this protein is Major outer membrane lipoprotein Lpp 1.